A 166-amino-acid polypeptide reads, in one-letter code: Endoribonuclease YbeY (166 aa).

3 residues coordinate Zn(2+): histidine 132, histidine 136, and histidine 142.

It belongs to the endoribonuclease YbeY family. Requires Zn(2+) as cofactor.

It localises to the cytoplasm. In terms of biological role, single strand-specific metallo-endoribonuclease involved in late-stage 70S ribosome quality control and in maturation of the 3' terminus of the 16S rRNA. In Clostridium botulinum (strain Eklund 17B / Type B), this protein is Endoribonuclease YbeY.